An 894-amino-acid chain; its full sequence is Phosphinomethylmalate isomerase (894 aa).

3 residues coordinate [4Fe-4S] cluster: cysteine 438, cysteine 504, and cysteine 507.

This sequence belongs to the aconitase/IPM isomerase family. It depends on [4Fe-4S] cluster as a cofactor.

The enzyme catalyses phosphinomethylmalate = phosphinomethylisomalate. It carries out the reaction phosphinomethylmalate = 2-(phosphinatomethylidene)butanedioate + H2O. It catalyses the reaction 2-(phosphinatomethylidene)butanedioate + H2O = phosphinomethylisomalate. Its pathway is secondary metabolite biosynthesis; bialaphos biosynthesis. In terms of biological role, isomerase involved in the biosynthesis of phosphinothricin tripeptide (PTT), also known as bialaphos (BA), a natural-product antibiotic and potent herbicide. Probably catalyzes the isomerization of phosphinomethylmalate to phosphinomethylisomalate. Shows no standard aconitase activity with citrate as a substrate and is not able to complement an acnA mutant. This Streptomyces viridochromogenes (strain DSM 40736 / JCM 4977 / BCRC 1201 / Tue 494) protein is Phosphinomethylmalate isomerase.